Here is a 626-residue protein sequence, read N- to C-terminus: tRNA 5-methylaminomethyl-2-thiouridine biosynthesis bifunctional protein MnmC (626 aa).

The tract at residues 1-237 (MKGPQLDYAD…KRDMTVGVFQ (237 aa)) is tRNA (mnm(5)s(2)U34)-methyltransferase. The segment at 255–626 (IGSGLSGANV…RVLPNRFSQE (372 aa)) is FAD-dependent cmnm(5)s(2)U34 oxidoreductase.

In the N-terminal section; belongs to the methyltransferase superfamily. tRNA (mnm(5)s(2)U34)-methyltransferase family. This sequence in the C-terminal section; belongs to the DAO family. FAD is required as a cofactor.

The protein resides in the cytoplasm. The catalysed reaction is 5-aminomethyl-2-thiouridine(34) in tRNA + S-adenosyl-L-methionine = 5-methylaminomethyl-2-thiouridine(34) in tRNA + S-adenosyl-L-homocysteine + H(+). Functionally, catalyzes the last two steps in the biosynthesis of 5-methylaminomethyl-2-thiouridine (mnm(5)s(2)U) at the wobble position (U34) in tRNA. Catalyzes the FAD-dependent demodification of cmnm(5)s(2)U34 to nm(5)s(2)U34, followed by the transfer of a methyl group from S-adenosyl-L-methionine to nm(5)s(2)U34, to form mnm(5)s(2)U34. This chain is tRNA 5-methylaminomethyl-2-thiouridine biosynthesis bifunctional protein MnmC, found in Hahella chejuensis (strain KCTC 2396).